The sequence spans 366 residues: tRNA-specific 2-thiouridylase MnmA (366 aa).

Residues 12–19 (GMSGGVDS) and Met38 contribute to the ATP site. The interaction with target base in tRNA stretch occupies residues 98 to 100 (NPD). The Nucleophile role is filled by Cys103. Cys103 and Cys200 are joined by a disulfide. Position 128 (Gly128) interacts with ATP. Positions 150–152 (KDQ) are interaction with tRNA. Catalysis depends on Cys200, which acts as the Cysteine persulfide intermediate. The segment at 312 to 313 (RY) is interaction with tRNA.

This sequence belongs to the MnmA/TRMU family.

It is found in the cytoplasm. The enzyme catalyses S-sulfanyl-L-cysteinyl-[protein] + uridine(34) in tRNA + AH2 + ATP = 2-thiouridine(34) in tRNA + L-cysteinyl-[protein] + A + AMP + diphosphate + H(+). In terms of biological role, catalyzes the 2-thiolation of uridine at the wobble position (U34) of tRNA, leading to the formation of s(2)U34. The chain is tRNA-specific 2-thiouridylase MnmA from Pseudoalteromonas translucida (strain TAC 125).